A 350-amino-acid polypeptide reads, in one-letter code: Protein MGF 360-12L (350 aa).

Residues 57–89 (DLNTALVKAVRENNYNLIKLFAEWGANINYGLV) form an ANK repeat.

It belongs to the asfivirus MGF 360 family.

Its function is as follows. Plays a role in virus cell tropism, and may be required for efficient virus replication in macrophages. The polypeptide is Protein MGF 360-12L (African swine fever virus (isolate Warthog/Namibia/Wart80/1980) (ASFV)).